We begin with the raw amino-acid sequence, 232 residues long: Jasmonate ZIM domain-containing protein 1 (232 aa).

Residues 1 to 24 (MSSFPNTVAEGRRSGKAPEKSTFS) are disordered. A compositionally biased stretch (basic and acidic residues) spans 10–19 (EGRRSGKAPE). Residues 96-131 (PGPESPQLTIFYAGKMLVFDAFPPEKATEVMEMATK) enclose the Tify domain. 2 stretches are compositionally biased toward polar residues: residues 133–142 (ASNNSGTEES) and 158–167 (MPQTNTSSET). The disordered stretch occupies residues 133-232 (ASNNSGTEES…QCSKQFDLNF (100 aa)). Positions 182-189 (PRRASLLK) match the Nuclear localization signal motif. Positions 183–205 (RRASLLKFLEKRKERVNARGPYQ) match the Jas motif. A compositionally biased stretch (basic and acidic residues) spans 190–199 (FLEKRKERVN).

This sequence belongs to the TIFY/JAZ family. In terms of assembly, (Microbial infection) Interacts with the pathogenic Pseudomonas syringae HopZ1a protein; this interaction leads to its degradation. In terms of processing, ubiquitinated. Targeted for degradation by the SCF(COI1) E3 ubiquitin ligase-proteasome pathway during jasmonate signaling. Post-translationally, (Microbial infection) Acetylated by Pseudomonas syringae HopZ1a. In terms of tissue distribution, mostly expressed in leaves and flowers and, to a lower extent, in grean pods and roots.

The protein resides in the nucleus. It localises to the cell membrane. In terms of biological role, repressor of jasmonate responses. In Glycine max (Soybean), this protein is Jasmonate ZIM domain-containing protein 1.